The chain runs to 134 residues: Thionin-2.1 (134 aa).

An N-terminal signal peptide occupies residues methionine 1 to alanine 24. Intrachain disulfides connect cysteine 27-cysteine 61, cysteine 28-cysteine 55, and cysteine 40-cysteine 49. Residues alanine 68–leucine 134 constitute a propeptide, acidic domain.

The protein belongs to the plant thionin (TC 1.C.44) family. As to expression, detected in rosette leaves and at a very high level in flowers and in siliques.

It is found in the secreted. Seems to function as a defense factor. Thionins are small plant proteins which are toxic to animal cells. They seem to exert their toxic effect at the level of the cell membrane. Their precise function is not known. The sequence is that of Thionin-2.1 (THI2.1) from Arabidopsis thaliana (Mouse-ear cress).